Reading from the N-terminus, the 116-residue chain is Ino eighty subunit 4 (116 aa).

Residues methionine 1–leucine 15 are compositionally biased toward low complexity. Disordered regions lie at residues methionine 1–proline 40 and glutamate 70–serine 116. The span at lysine 84–lysine 108 shows a compositional bias: basic and acidic residues.

Component of the chromatin-remodeling INO80 complex, at least composed of ARP4, ARP5, ARP8, RVB1, RVB2, TAF14, NHP10, IES1, IES3, IES4, IES6, ACT1, IES2, IES5 and INO80.

The protein resides in the nucleus. This Saccharomyces cerevisiae (strain ATCC 204508 / S288c) (Baker's yeast) protein is Ino eighty subunit 4 (IES4).